A 127-amino-acid chain; its full sequence is Biogenesis of lysosome-related organelles complex 1 subunit BLS1 (127 aa).

The segment at 103–127 (KNSHNTNHGGCNKTKNSSKDKLLDK) is disordered. Residues 105 to 117 (SHNTNHGGCNKTK) show a composition bias toward polar residues.

This sequence belongs to the BLOC1S1 family. Component of the biogenesis of lysosome-related organelles complex-1 (BLOC-1).

It is found in the endosome. Its function is as follows. Component of the biogenesis of lysosome-related organelles complex-1 (BLOC-1), a complex involved in endosomal cargo sorting. In Vanderwaltozyma polyspora (strain ATCC 22028 / DSM 70294 / BCRC 21397 / CBS 2163 / NBRC 10782 / NRRL Y-8283 / UCD 57-17) (Kluyveromyces polysporus), this protein is Biogenesis of lysosome-related organelles complex 1 subunit BLS1 (BLS1).